A 48-amino-acid polypeptide reads, in one-letter code: Small polypeptide DEVIL 22 (48 aa).

The chain crosses the membrane as a helical span at residues 7–23 (KLNKGHAFTSKCASLVK). A required for DVL/RTFL small polypeptide activity region spans residues 13-44 (AFTSKCASLVKEQRARLYILRRCATMLCCWYI).

This sequence belongs to the DVL/RTFL small polypeptides family.

The protein localises to the cell membrane. In terms of biological role, small polypeptide acting as a regulatory molecule which coordinates cellular responses required for differentiation, growth and development, probably by restricting polar cell proliferation in lateral organs and coordinating socket cell recruitment and differentiation at trichome sites. In Arabidopsis thaliana (Mouse-ear cress), this protein is Small polypeptide DEVIL 22.